The primary structure comprises 321 residues: MQKMVWAFIVASAVGLLIGPWLIPYLRRLKFGQSIREEGPKGHQRKAGTPTMGGLLFLIAVPMAVLVTVGFTPQSGVLLLGLLGFGLIGFLDDYIKVVKKRNLGLRAWQKFTGQLILSLILIYGVVYGIDRGTSLYLPGFEVWWDAGALYYPLALLLIVGTTNAVNLADGLDGLAAGMTFWVALAFAAIASAGTSDVTAAFAAALAGGCIGFLFFNHHPARMFMGDTGSLALGGAVATLALLTRTELILPVLGAVFVAETLSVILQVASFKLTGKRIFRMSPLHHHFELGGWPETTVVYTFWAASLISAFLGVLLAMPIRF.

10 consecutive transmembrane segments (helical) span residues 4–24 (MVWAFIVASAVGLLIGPWLIP), 51–71 (TMGGLLFLIAVPMAVLVTVGF), 75–95 (SGVLLLGLLGFGLIGFLDDYI), 109–129 (QKFTGQLILSLILIYGVVYGI), 139–159 (GFEVWWDAGALYYPLALLLIV), 173–193 (GLAAGMTFWVALAFAAIASAG), 195–215 (SDVTAAFAAALAGGCIGFLFF), 222–242 (MFMGDTGSLALGGAVATLALL), 247–267 (LILPVLGAVFVAETLSVILQV), and 297–317 (VVYTFWAASLISAFLGVLLAM).

It belongs to the glycosyltransferase 4 family. MraY subfamily. The cofactor is Mg(2+).

It localises to the cell membrane. The catalysed reaction is UDP-N-acetyl-alpha-D-muramoyl-L-alanyl-gamma-D-glutamyl-meso-2,6-diaminopimeloyl-D-alanyl-D-alanine + di-trans,octa-cis-undecaprenyl phosphate = di-trans,octa-cis-undecaprenyl diphospho-N-acetyl-alpha-D-muramoyl-L-alanyl-D-glutamyl-meso-2,6-diaminopimeloyl-D-alanyl-D-alanine + UMP. The protein operates within cell wall biogenesis; peptidoglycan biosynthesis. In terms of biological role, catalyzes the initial step of the lipid cycle reactions in the biosynthesis of the cell wall peptidoglycan: transfers peptidoglycan precursor phospho-MurNAc-pentapeptide from UDP-MurNAc-pentapeptide onto the lipid carrier undecaprenyl phosphate, yielding undecaprenyl-pyrophosphoryl-MurNAc-pentapeptide, known as lipid I. The protein is Phospho-N-acetylmuramoyl-pentapeptide-transferase of Heliobacterium modesticaldum (strain ATCC 51547 / Ice1).